Here is a 366-residue protein sequence, read N- to C-terminus: Prostaglandin F2-alpha receptor (366 aa).

Residues 1–31 (MSINSSKQPASSAAGLIANTTCQTENRLSVF) lie on the Extracellular side of the membrane. N-linked (GlcNAc...) asparagine glycans are attached at residues Asn-4 and Asn-19. Residues 32 to 55 (FSIIFMTVGIVSNSLAIAILMKAY) form a helical membrane-spanning segment. Residues 56 to 69 (QRFRRKSKASFLLL) lie on the Cytoplasmic side of the membrane. Residues 70–90 (ASGLVITDFFGHLINGGIAVF) form a helical membrane-spanning segment. The Extracellular segment spans residues 91 to 109 (VYASDKDWIRFDQSNILCS). The cysteines at positions 108 and 186 are disulfide-linked. The chain crosses the membrane as a helical span at residues 110–131 (VFGISMVFSGLCPLFLGSTMAI). Residues 132-152 (ERCIGVTNPLFHSTKITSKHV) lie on the Cytoplasmic side of the membrane. A helical transmembrane segment spans residues 153–175 (KMILSGVCMFAVFVALLPILGHR). At 176–198 (DYQIQASRTWCFYNTEHIEDWED) the chain is on the extracellular side. The helical transmembrane segment at 199 to 224 (RFYLLFFSSLGLLALGISFSCNAVTG) threads the bilayer. The Cytoplasmic portion of the chain corresponds to 225–250 (VTLLRVKFRSQQHRQGRSHHLEMVIQ). Residues 251–267 (LLAIMCVSCVCWSPFLV) traverse the membrane as a helical segment. The Extracellular segment spans residues 268-285 (TMANIAINGNNSPVTCET). A helical membrane pass occupies residues 286 to 307 (TLFALRMATWNQILDPWVYILL). Residues 308 to 366 (RKAVLRNLYKLASRCCGVNIISLHIWELSSIKNSLKVAAISESPAAEKENQQASSEAGL) are Cytoplasmic-facing.

This sequence belongs to the G-protein coupled receptor 1 family. In terms of tissue distribution, highest expression in pregnant ovary. Also found in a low extent in the kidney. In the brain, expressed in astrocytes and oligodendrocytes, and meningeal fibroblasts, but not in migroglia cells.

The protein resides in the cell membrane. Functionally, receptor for prostaglandin F2-alpha (PGF2-alpha). The activity of this receptor is mediated by G proteins which activate a phosphatidylinositol-calcium second messenger system. Initiates luteolysis in the corpus luteum. This Rattus norvegicus (Rat) protein is Prostaglandin F2-alpha receptor (Ptgfr).